The primary structure comprises 204 residues: Inactive ribonuclease-like protein 9 (204 aa).

A signal peptide spans 1 to 26 (MMRTLITIHPLPLLLLLQQLLQPVQF). Cystine bridges form between Cys-97/Cys-152, Cys-115/Cys-167, and Cys-122/Cys-129. 2 N-linked (GlcNAc...) asparagine glycosylation sites follow: Asn-130 and Asn-142.

It belongs to the pancreatic ribonuclease family.

The protein resides in the secreted. Its function is as follows. Does not exhibit any ribonuclease activity. In Pongo pygmaeus (Bornean orangutan), this protein is Inactive ribonuclease-like protein 9 (RNASE9).